The primary structure comprises 465 residues: uncharacterized protein (465 aa).

The region spanning 1-50 (MEITDLAAEGNALCRIDDMVMFVPFAAPGDRCTVQVVKKKRNFMQGRIVS) is the TRAM domain. 4 residues coordinate [4Fe-4S] cluster: Cys63, Cys69, Cys72, and Cys168. Gln293, Tyr322, Glu343, and Asp392 together coordinate S-adenosyl-L-methionine. The active-site Nucleophile is the Cys419.

This sequence belongs to the class I-like SAM-binding methyltransferase superfamily. RNA M5U methyltransferase family.

This is an uncharacterized protein from Porphyromonas gingivalis (strain ATCC BAA-308 / W83).